Here is a 187-residue protein sequence, read N- to C-terminus: Apolipophorin-3 (187 aa).

The signal sequence occupies residues 1 to 17; sequence MAAKFIILLALFALSQA. Residues 18–22 constitute a propeptide that is removed on maturation; it reads SVVRR.

This sequence belongs to the insect apolipophorin-3 family. In terms of assembly, equilibrium between a soluble monomer and a bound lipoprotein form. Apolipophorin-3 associates with lipophorin during lipid loading until each particle contains 9 or 14 molecules of apolipophorin-3. As to expression, hemolymph.

The protein resides in the secreted. Functionally, assists in the loading of diacylglycerol, generated from triacylglycerol stores in the fat body through the action of adipokinetic hormone, into lipophorin, the hemolymph lipoprotein. It increases the lipid carrying capacity of lipophorin by covering the expanding hydrophobic surface resulting from diacylglycerol uptake. It thus plays a critical role in the transport of lipids during flight in several species of insects. The chain is Apolipophorin-3 from Hyphantria cunea (Fall webworm moth).